The chain runs to 285 residues: Probable endonuclease 4 (285 aa).

Zn(2+)-binding residues include His69, His109, Glu145, Asp179, His182, His216, Asp229, His231, and Glu261.

It belongs to the AP endonuclease 2 family. Zn(2+) is required as a cofactor.

The enzyme catalyses Endonucleolytic cleavage to 5'-phosphooligonucleotide end-products.. Endonuclease IV plays a role in DNA repair. It cleaves phosphodiester bonds at apurinic or apyrimidinic (AP) sites, generating a 3'-hydroxyl group and a 5'-terminal sugar phosphate. The protein is Probable endonuclease 4 of Salmonella newport (strain SL254).